Consider the following 285-residue polypeptide: Elongation factor Ts (285 aa).

An involved in Mg(2+) ion dislocation from EF-Tu region spans residues 84-87 (TDFV).

This sequence belongs to the EF-Ts family.

It is found in the cytoplasm. Functionally, associates with the EF-Tu.GDP complex and induces the exchange of GDP to GTP. It remains bound to the aminoacyl-tRNA.EF-Tu.GTP complex up to the GTP hydrolysis stage on the ribosome. The sequence is that of Elongation factor Ts from Bifidobacterium animalis subsp. lactis (strain AD011).